Reading from the N-terminus, the 192-residue chain is 3-hydroxyanthranilate 3,4-dioxygenase 1 (192 aa).

Arg50 provides a ligand contact to O2. Fe cation is bound by residues His54, Glu60, and His102. Glu60 serves as a coordination point for substrate. Substrate-binding residues include Arg106 and Glu116. A divalent metal cation-binding residues include Cys131, Cys134, Cys168, and Cys171.

The protein belongs to the 3-HAO family. Fe(2+) is required as a cofactor.

It localises to the cytoplasm. It catalyses the reaction 3-hydroxyanthranilate + O2 = (2Z,4Z)-2-amino-3-carboxymuconate 6-semialdehyde. It participates in cofactor biosynthesis; NAD(+) biosynthesis; quinolinate from L-kynurenine: step 3/3. Its function is as follows. Catalyzes the oxidative ring opening of 3-hydroxyanthranilate to 2-amino-3-carboxymuconate semialdehyde, which spontaneously cyclizes to quinolinate. The chain is 3-hydroxyanthranilate 3,4-dioxygenase 1 (bna1-1) from Aspergillus oryzae (strain ATCC 42149 / RIB 40) (Yellow koji mold).